Reading from the N-terminus, the 122-residue chain is Large ribosomal subunit protein uL14 (122 aa).

It belongs to the universal ribosomal protein uL14 family. Part of the 50S ribosomal subunit. Forms a cluster with proteins L3 and L19. In the 70S ribosome, L14 and L19 interact and together make contacts with the 16S rRNA in bridges B5 and B8.

In terms of biological role, binds to 23S rRNA. Forms part of two intersubunit bridges in the 70S ribosome. The sequence is that of Large ribosomal subunit protein uL14 from Micrococcus luteus (strain ATCC 4698 / DSM 20030 / JCM 1464 / CCM 169 / CCUG 5858 / IAM 1056 / NBRC 3333 / NCIMB 9278 / NCTC 2665 / VKM Ac-2230) (Micrococcus lysodeikticus).